The sequence spans 283 residues: MNDSQRVSILSEALPYIQSFSGRKIVIKYGGSVMENDNLKKAFFRDIALLSSVGVCPIVIHGGGPEINNWLKKLEISPKFENGLRITDQKTMDIVEMVLMGRVNKQIVKGVNKTGSLAVGISGLDGNLIQSRELGDGSHGLVGEVTKINPEILDPLISKGYIPIISSIGSTMEGISHNINADFVAGEIAAAINAEKLILLTDTQGILKEKDNKNSLVEKMNLKEARNFIDKKIVTEGMIPKTECCIRALAQGVKAAHIIDGRIEHSLLLEIFTNSGIGTMIVA.

Substrate is bound by residues 63–64 (GG), arginine 85, and asparagine 178.

This sequence belongs to the acetylglutamate kinase family. ArgB subfamily.

It is found in the cytoplasm. It catalyses the reaction N-acetyl-L-glutamate + ATP = N-acetyl-L-glutamyl 5-phosphate + ADP. Its pathway is amino-acid biosynthesis; L-arginine biosynthesis; N(2)-acetyl-L-ornithine from L-glutamate: step 2/4. Its function is as follows. Catalyzes the ATP-dependent phosphorylation of N-acetyl-L-glutamate. The protein is Acetylglutamate kinase of Prochlorococcus marinus (strain MIT 9312).